A 119-amino-acid chain; its full sequence is BLOC-1-related complex subunit 8 (119 aa).

At serine 109 the chain carries Phosphoserine.

This sequence belongs to the BORCS8 family. Component of the BLOC-one-related complex (BORC) which is composed of BLOC1S1, BLOC1S2, BORCS5, BORCS6, BORCS7, BORCS8, KXD1 and SNAPIN.

It is found in the lysosome membrane. As part of the BLOC-one-related complex (BORC), it plays a role in the movement and localization of lysosomes at the cell periphery. Associated with the cytosolic face of lysosomes, BORC recruits ARL8B to the lysosomal membrane and couples lysosomes to microtubule plus-end-directed kinesin motors, driving lysosome movement toward the cell periphery. This is BLOC-1-related complex subunit 8 from Homo sapiens (Human).